Here is a 952-residue protein sequence, read N- to C-terminus: Microtubule-associated protein 6 (952 aa).

The tract at residues 1–15 (MAWPCITRACCIARF) is calmodulin-binding. S-palmitoyl cysteine attachment occurs at residues Cys5, Cys10, and Cys11. Disordered regions lie at residues 37–457 (TEHP…RAVA) and 486–952 (IKPV…EGSP). Residues 41 to 55 (GAPPQPPAPPQPGLA) are compositionally biased toward pro residues. Position 98 is a phosphoserine (Ser98). The segment covering 105–117 (ASGSTSGSGPADS) has biased composition (low complexity). The interval 116-139 (DSVMRQDYRAWKVQRPEPSCRPRS) is mn 1. Residues 119-139 (MRQDYRAWKVQRPEPSCRPRS) show a composition bias toward basic and acidic residues. The segment at 124–138 (RAWKVQRPEPSCRPR) is calmodulin-binding. Residue Tyr141 is modified to Phosphotyrosine. Basic and acidic residues predominate over residues 147–171 (PFERETQYQKDFRAWPLPRRGDHPW). A mn 2 region spans residues 151-174 (ETQYQKDFRAWPLPRRGDHPWIPK). The calmodulin-binding stretch occupies residues 160–174 (AWPLPRRGDHPWIPK). A Phosphoserine modification is found at Ser185. Residues 187–201 (PVLGMPKRRPQSQER) are calmodulin-binding. Ser207 carries the post-translational modification Phosphoserine. Over residues 221–230 (VPAAGKASGA) the composition is skewed to low complexity. Residues 222–267 (PAAGKASGADQRDTRRKAGPAWMVTRTEGHEEKPLPPAQSQTQEGG) form a Mc-1 repeat. The 5 X approximate tandem repeat Mc stretch occupies residues 222 to 451 (PAAGKASGAD…HAQGTGPEGG (230 aa)). Calmodulin-binding regions lie at residues 235–249 (TRRK…TRTE), 280–294 (DTRR…VTRT), 325–339 (RDTR…MVTR), 373–387 (TRRK…TRTE), 421–435 (RKAG…SEGH), 481–495 (RAWT…IKAK), 532–546 (RRRI…FKES), and 559–573 (PKKT…RKAK). The stretch at 268–313 (PAAGKASGADQRDTRRKAGPAWMVTRTEGHEEKPLPPAQSQTQEGG) is one Mc-2 repeat. One copy of the Mc-3 repeat lies at 314-359 (PAAGKASGADQRDTRRKAGPAWMVTRTEGHEETPLPPAQSQTQEGG). The Mc-4 repeat unit spans residues 360 to 405 (PAAGKASGADQRDTRRKAGPAWMVTRTEGHEETPLPPAQSQTQEGG). One copy of the Mc-5 repeat lies at 406–451 (PAAGKASGADERDTRRKAGPAWMVRRSEGHEQTTAAHAQGTGPEGG). A mn 3 region spans residues 473-496 (SSSYRNEFRAWTDIKPVKPIKAKP). Residues 542 to 551 (PFKESPKVEK) are compositionally biased toward basic and acidic residues. The span at 552–567 (PSVQSSKPKKTSTSQK) shows a compositional bias: low complexity. Ser590 is subject to Phosphoserine. The segment covering 595–621 (KPDDKEQSKEMNNKLAEAKESRVKPTS) has biased composition (basic and acidic residues). At Ser681 the chain carries Phosphoserine. The segment covering 711–725 (KDQDHMASELLKNKD) has biased composition (basic and acidic residues). Ser736 carries the post-translational modification Phosphoserine. Over residues 761 to 775 (APAPTPLKDPGPVIP) the composition is skewed to pro residues. 2 stretches are compositionally biased toward basic and acidic residues: residues 776 to 792 (EPEK…RKDQ) and 821 to 831 (PAKDTGTDLKG). The span at 903–915 (VPAPTKDPGPTAP) shows a compositional bias: pro residues. A Phosphoserine modification is found at Ser951.

This sequence belongs to the STOP family. Interacts with calmodulin (via C-terminus); the interaction is dependent on Ca(2+). Interacts (via C-terminus) with TMEM106B (via N-terminus). Interacts with ZDHHC13 (via ANK repeats). Interacts with ZDHHC17 (via ANK repeats). In terms of processing, palmitoylated. Probably depalmitoylated by ABHD17A, ABHD17B and ABHD17C. During neuronal polarization, palmitoylation and depalmitoylation cycles regulate MAP6 shuttling between secretory vesicles and microtubules, and its polarized distribution in the axon. Isoform 1 is specifically expressed in adult brain. Isoform 2 is predominantly expressed in embryonic brain; expression persists at low levels in the adult brain.

The protein resides in the cytoplasm. It is found in the cytoskeleton. It localises to the golgi apparatus. The protein localises to the cell projection. Its subcellular location is the axon. The protein resides in the dendrite. It is found in the cytoplasmic vesicle. It localises to the secretory vesicle membrane. In terms of biological role, involved in microtubule stabilization in many cell types, including neuronal cells. Specifically has microtubule cold stabilizing activity. Involved in dendrite morphogenesis and maintenance by regulating lysosomal trafficking via its interaction with TMEM106B. Regulates KIF5A-mediated axonal cargo transport. Regulates axonal growth during neuron polarization. This is Microtubule-associated protein 6 (Map6) from Rattus norvegicus (Rat).